The sequence spans 154 residues: Myoglobin (154 aa).

The region spanning 2–148 (GLSDEEWKKV…FRNDMASRYK (147 aa)) is the Globin domain. H65 provides a ligand contact to nitrite. H65 is an O2 binding site. H94 provides a ligand contact to heme b.

It belongs to the globin family. Monomeric.

The protein localises to the cytoplasm. Its subcellular location is the sarcoplasm. It catalyses the reaction Fe(III)-heme b-[protein] + nitric oxide + H2O = Fe(II)-heme b-[protein] + nitrite + 2 H(+). The enzyme catalyses H2O2 + AH2 = A + 2 H2O. Monomeric heme protein which primary function is to store oxygen and facilitate its diffusion within muscle tissues. Reversibly binds oxygen through a pentacoordinated heme iron and enables its timely and efficient release as needed during periods of heightened demand. Depending on the oxidative conditions of tissues and cells, and in addition to its ability to bind oxygen, it also has a nitrite reductase activity whereby it regulates the production of bioactive nitric oxide. Under stress conditions, like hypoxia and anoxia, it also protects cells against reactive oxygen species thanks to its pseudoperoxidase activity. In Varanus varius (Lace monitor lizard), this protein is Myoglobin (MB).